The sequence spans 784 residues: Transcription factor Sp1 (784 aa).

The disordered stretch occupies residues 1–95 (MSDQDHSMDE…PSQSGGTGEL (95 aa)). Ser2 is subject to N-acetylserine. A phosphoserine mark is found at Ser2 and Ser7. The tract at residues 2-84 (SDQDHSMDEV…SPNENSNNSQ (83 aa)) is repressor domain. Lys16 is covalently cross-linked (Glycyl lysine isopeptide (Lys-Gly) (interchain with G-Cter in SUMO); alternate). Lys16 is covalently cross-linked (Glycyl lysine isopeptide (Lys-Gly) (interchain with G-Cter in SUMO2); alternate). The segment covering 23–34 (GNNGGSGNGGGA) has biased composition (gly residues). The segment covering 37–49 (SQTRSSSTGSSSS) has biased composition (low complexity). Ser61 carries the phosphoserine modification. Residues 74-87 (ESPNENSNNSQGPS) show a composition bias toward low complexity. The residue at position 103 (Ser103) is a Phosphoserine; by ATM. Residues 111–125 (IISSSSGATPTSKEQ) are compositionally biased toward polar residues. A disordered region spans residues 111-144 (IISSSSGATPTSKEQSGNSTNGSNGSESSKNRTV). Residues 126–138 (SGNSTNGSNGSES) are compositionally biased toward low complexity. The segment at 148-253 (QYVVAATPNL…ANNVLSGQTQ (106 aa)) is transactivation domain A (Gln-rich). A transactivation domain B (Gln-rich) region spans residues 263-497 (NGNITLLPVN…PMQGVSLGQT (235 aa)). Thr280 is modified (phosphothreonine; by MAPK8). Disordered stretches follow at residues 282–303 (SSQAGTISSSGSQESSSQPVTS) and 333–398 (TTTS…QTQQ). Low complexity-rich tracts occupy residues 344–357 (TSSGSSGTSSQGQT) and 373–398 (QQNQTSGGSLQGSQQKEGEQSQQTQQ). Thr455 carries the post-translational modification Phosphothreonine; by MAPK1 and MAPK3. The 9aaTAD motif lies at 464-472 (VSWQTLQLQ). Residue Ser493 is glycosylated (O-linked (GlcNAc) serine). The transactivation domain C (highly charged) stretch occupies residues 498–611 (SSSNTTLTPI…REACTCPYCK (114 aa)). Residues 566 to 598 (QLGLHGSGGDGIHDETAGGEGENSSDLQPQAGR) are disordered. Ser613 bears the Phosphoserine; alternate mark. O-linked (GlcNAc) serine; alternate glycosylation occurs at Ser613. The interval 620–784 (DPGKKKQHIC…QSINISGNGF (165 aa)) is VZV IE62-binding. 3 C2H2-type zinc fingers span residues 627–656 (HICHIQGCGKVYGKTSHLRAHLRWHTGERP), 657–686 (FMCNWSYCGKRFTRSDELQRHKRTHTGEKK), and 687–714 (FACPECPKRFMRSDHLSKHIKTHQNKKG). Thr641 bears the Phosphothreonine; alternate mark. Residue Thr641 is glycosylated (O-linked (GlcNAc) threonine; alternate). Ser642 is a glycosylation site (O-linked (GlcNAc) serine; alternate). At Ser642 the chain carries Phosphoserine; by PKC/PRKCZ; alternate. Phosphothreonine; by PKC/PRKCZ is present on Thr652. Thr669 bears the Phosphothreonine mark. Ser671 is modified (phosphoserine; by PKC/PRKCZ). A Phosphothreonine; by PKC/PRKCZ modification is found at Thr682. Phosphoserine; alternate is present on residues Ser699 and Ser703. O-linked (GlcNAc) serine; alternate glycosylation is found at Ser699 and Ser703. Residue Lys704 is modified to N6-acetyllysine. The segment at 709–784 (HQNKKGGPGV…QSINISGNGF (76 aa)) is domain D. Thr738 is subject to Phosphothreonine; by MAPK1, MAPK3 and MAPK8.

Belongs to the Sp1 C2H2-type zinc-finger protein family. As to quaternary structure, interacts with ATF7IP, ATF7IP2, BAHD1, POGZ, HCFC1, AATF and PHC2. Interacts with SV40 VP2/3 proteins. Interacts with SV40 major capsid protein VP1; this interaction leads to a cooperativity between the 2 proteins in DNA binding. Interacts with HLTF; the interaction may be required for basal transcriptional activity of HLTF. Interacts (deacetylated form) with EP300; the interaction enhances gene expression. Interacts with HDAC1 and JUN. Interacts with ELF1; the interaction is inhibited by glycosylation of SP1. Interaction with NFYA; the interaction is inhibited by glycosylation of SP1. Interacts with SMARCA4/BRG1. Interacts with ATF7IP and TBP. Interacts with MEIS2 isoform 4 and PBX1 isoform PBX1a. Interacts with EGR1. Interacts with RNF112 in an oxidative stress-regulated manner. Interacts with ZBTB7A; ZBTB7A prevents the binding to GC-rich motifs in promoters and represses the transcriptional activity of SP1. Interacts with DDX3X; this interaction potentiates SP1-induced CDKN1A/WAF1/CIP1 transcription. Interacts with MSX1; the interaction may inhibit MSX1 autoinactivation. Interacts with MSX3. (Microbial infection) Interacts with murine minute virus NS1; this interaction allows high levels of viral P38 promoter transactivation by NS1. Post-translationally, phosphorylated on multiple serine and threonine residues. Phosphorylation is coupled to ubiquitination, sumoylation and proteolytic processing. Phosphorylation on Ser-61 enhances proteolytic cleavage. Phosphorylation on Ser-7 enhances ubiquitination and protein degradation. Hyperphosphorylation on Ser-103 in response to DNA damage has no effect on transcriptional activity. MAPK1/MAPK3-mediated phosphorylation on Thr-455 and Thr-738 enhances VEGF transcription but, represses FGF2-triggered PDGFR-alpha transcription. Also implicated in the repression of RECK by ERBB2. Hyperphosphorylated on Thr-280 and Thr-738 during mitosis by MAPK8 shielding SP1 from degradation by the ubiquitin-dependent pathway. Phosphorylated in the zinc-finger domain by calmodulin-activated PKCzeta. Phosphorylation on Ser-642 by PKCzeta is critical for TSA-activated LHR gene expression through release of its repressor, p107. Phosphorylation on Thr-669, Ser-671 and Thr-682 is stimulated by angiotensin II via the AT1 receptor inducing increased binding to the PDGF-D promoter. This phosphorylation is increased in injured artey wall. Ser-61 and Thr-682 can both be dephosphorylated by PP2A during cell-cycle interphase. Dephosphorylation on Ser-61 leads to increased chromatin association during interphase and increases the transcriptional activity. On insulin stimulation, sequentially glycosylated and phosphorylated on several C-terminal serine and threonine residues. In terms of processing, acetylated. Acetylation/deacetylation events affect transcriptional activity. Deacetylation leads to an increase in the expression of the 12(s)-lipooxygenase gene through recruitment of p300 to the promoter. Deacetylated by HDAC6 which leads to increased expression of ENG and positive regulation of angiogenesis. Ubiquitinated. Ubiquitination occurs on the C-terminal proteolytically-cleaved peptide and is triggered by phosphorylation. Post-translationally, sumoylated with SUMO1. Sumoylation modulates proteolytic cleavage of the N-terminal repressor domain. Sumoylation levels are attenuated during tumorigenesis. Phosphorylation mediates SP1 desumoylation. In terms of processing, proteolytic cleavage in the N-terminal repressor domain is prevented by sumoylation. The C-terminal cleaved product is susceptible to degradation. O-glycosylated; Contains 8 N-acetylglucosamine side chains. Levels are controlled by insulin and the SP1 phosphorylation states. Insulin-mediated O-glycosylation locates SP1 to the nucleus, where it is sequentially deglycosylated and phosphorylated. O-glycosylation affects transcriptional activity through disrupting the interaction with a number of transcription factors including ELF1 and NFYA. Inhibited by peroxisomome proliferator receptor gamma (PPARgamma).

Its subcellular location is the nucleus. It localises to the cytoplasm. In terms of biological role, transcription factor that can activate or repress transcription in response to physiological and pathological stimuli. Binds with high affinity to GC-rich motifs and regulates the expression of a large number of genes involved in a variety of processes such as cell growth, apoptosis, differentiation and immune responses. Highly regulated by post-translational modifications (phosphorylations, sumoylation, proteolytic cleavage, glycosylation and acetylation). Also binds the PDGFR-alpha G-box promoter. May have a role in modulating the cellular response to DNA damage. Implicated in chromatin remodeling. Plays a role in the recruitment of SMARCA4/BRG1 on the c-FOS promoter Plays an essential role in the regulation of FE65 gene expression. Positively regulates the transcription of the core clock component BMAL1. Plays a role in protecting cells against oxidative stress following brain injury by regulating the expression of RNF112. This Mus musculus (Mouse) protein is Transcription factor Sp1 (Sp1).